The sequence spans 71 residues: Immune-induced peptide 18 (71 aa).

The N-terminal stretch at 1-24 (MKLIALCCLLLLGLLGFLAAPGVA) is a signal peptide. Residues 25–26 (SP) constitute a propeptide that is removed on maturation. A disordered region spans residues 26–71 (PSRHTGPGNGSGSGAGSGNPFRSPSSQQRPLYYDAPIGKPSKTMYA). Residues 32–42 (PGNGSGSGAGS) show a composition bias toward gly residues.

As to expression, hemolymph (at protein level).

The protein resides in the secreted. The protein is Immune-induced peptide 18 (IM18) of Drosophila melanogaster (Fruit fly).